The sequence spans 220 residues: Protein GrpE (220 aa).

The tract at residues 1 to 55 is disordered; the sequence is MCGGDVQGQGVASGCDEALERADSLRASDPVPVESGEGSVPGEHSQELETGASEE.

This sequence belongs to the GrpE family. In terms of assembly, homodimer.

It localises to the cytoplasm. Its function is as follows. Participates actively in the response to hyperosmotic and heat shock by preventing the aggregation of stress-denatured proteins, in association with DnaK and GrpE. It is the nucleotide exchange factor for DnaK and may function as a thermosensor. Unfolded proteins bind initially to DnaJ; upon interaction with the DnaJ-bound protein, DnaK hydrolyzes its bound ATP, resulting in the formation of a stable complex. GrpE releases ADP from DnaK; ATP binding to DnaK triggers the release of the substrate protein, thus completing the reaction cycle. Several rounds of ATP-dependent interactions between DnaJ, DnaK and GrpE are required for fully efficient folding. The chain is Protein GrpE from Treponema pallidum (strain Nichols).